Consider the following 189-residue polypeptide: GTPase HRas (189 aa).

The residue at position 1 (methionine 1) is an N-acetylmethionine; in GTPase HRas; alternate. The residue at position 2 (threonine 2) is an N-acetylthreonine; in GTPase HRas, N-terminally processed. Residues glycine 13 to alanine 18, valine 29 to threonine 35, alanine 59 to glycine 60, asparagine 116 to aspartate 119, and serine 145 to lysine 147 each bind GTP. Positions tyrosine 32 to tyrosine 40 match the Effector region motif. (Microbial infection) O-linked (Glc) threonine; by P.sordellii toxin TcsL glycosylation occurs at threonine 35. S-nitrosocysteine is present on cysteine 118. The segment at histidine 166–lysine 185 is hypervariable region. Residue lysine 170 forms a Glycyl lysine isopeptide (Lys-Gly) (interchain with G-Cter in ubiquitin) linkage. Cysteine 181 carries the S-palmitoyl cysteine lipid modification. The S-(15-deoxy-Delta12,14-prostaglandin J2-9-yl)cysteine; alternate moiety is linked to residue cysteine 184. Cysteine 184 carries the S-palmitoyl cysteine; alternate lipid modification. Cysteine 186 carries the cysteine methyl ester modification. Cysteine 186 carries S-farnesyl cysteine lipidation. Residues valine 187 to serine 189 constitute a propeptide, removed in mature form.

The protein belongs to the small GTPase superfamily. Ras family. As to quaternary structure, in its GTP-bound form interacts with PLCE1. Interacts with TBC1D10C. Interacts with RGL3. Interacts with HSPD1. Found in a complex with at least BRAF, HRAS, MAP2K1, MAPK3 and RGS14. Interacts (active GTP-bound form) with RGS14 (via RBD 1 domain). Forms a signaling complex with RASGRP1 and DGKZ. Interacts with RASSF5. Interacts with PDE6D. Interacts with IKZF3. Interacts with RACK1. Interacts with PIK3CG; the interaction is required for membrane recruitment and beta-gamma G protein dimer-dependent activation of the PI3K gamma complex PIK3CG:PIK3R6. Interacts with RAPGEF2. Interacts (active GTP-bound form) with both SHOC2 and PP1c (all isoforms) to form a tertiary complex; SHOC2 and PP1c preferably bind M-Ras/MRAS, but they also bind K-Ras/KRAS, N-Ras/NRAS and H-Ras/HRAS. Interacts (GTP-bound form) with MAPKAP1/SIN1; inhibiting H-Ras/HRAS activity. Palmitoylated by the ZDHHC9-GOLGA7 complex. A continuous cycle of de- and re-palmitoylation regulates rapid exchange between plasma membrane and Golgi. Post-translationally, S-nitrosylated; critical for redox regulation. Important for stimulating guanine nucleotide exchange. No structural perturbation on nitrosylation. In terms of processing, the covalent modification of cysteine by 15-deoxy-Delta12,14-prostaglandin-J2 is autocatalytic and reversible. It may occur as an alternative to other cysteine modifications, such as S-nitrosylation and S-palmitoylation. Acetylation at Lys-104 prevents interaction with guanine nucleotide exchange factors (GEFs). Post-translationally, fatty-acylated at Lys-170. In terms of processing, ubiquitinated by the BCR(LZTR1) E3 ubiquitin ligase complex at Lys-170 in a non-degradative manner, leading to inhibit Ras signaling by decreasing Ras association with membranes. (Microbial infection) Glucosylated at Thr-35 by P.sordellii toxin TcsL. Monoglucosylation completely prevents the recognition of the downstream effector, blocking the GTPases in their inactive form, leading to inhibit Ras signaling. As to expression, widely expressed.

The protein localises to the cell membrane. It localises to the golgi apparatus. The protein resides in the golgi apparatus membrane. It is found in the nucleus. Its subcellular location is the cytoplasm. The protein localises to the perinuclear region. It carries out the reaction GTP + H2O = GDP + phosphate + H(+). With respect to regulation, alternates between an inactive form bound to GDP and an active form bound to GTP. Activated by a guanine nucleotide-exchange factor (GEF) and inactivated by a GTPase-activating protein (GAP). Involved in the activation of Ras protein signal transduction. Ras proteins bind GDP/GTP and possess intrinsic GTPase activity. The protein is GTPase HRas (HRAS) of Homo sapiens (Human).